Consider the following 239-residue polypeptide: UDP-2,3-diacylglucosamine hydrolase (239 aa).

The Mn(2+) site is built by Asp8, His10, Asp41, Asn78, and His113. Substrate is bound at residue 78-79 (NR). Residues Asp121, Ser159, Asn163, Lys166, and His194 each coordinate substrate. Residues His194 and His196 each contribute to the Mn(2+) site.

This sequence belongs to the LpxH family. Requires Mn(2+) as cofactor.

The protein localises to the cell inner membrane. It carries out the reaction UDP-2-N,3-O-bis[(3R)-3-hydroxytetradecanoyl]-alpha-D-glucosamine + H2O = 2-N,3-O-bis[(3R)-3-hydroxytetradecanoyl]-alpha-D-glucosaminyl 1-phosphate + UMP + 2 H(+). It participates in glycolipid biosynthesis; lipid IV(A) biosynthesis; lipid IV(A) from (3R)-3-hydroxytetradecanoyl-[acyl-carrier-protein] and UDP-N-acetyl-alpha-D-glucosamine: step 4/6. Hydrolyzes the pyrophosphate bond of UDP-2,3-diacylglucosamine to yield 2,3-diacylglucosamine 1-phosphate (lipid X) and UMP by catalyzing the attack of water at the alpha-P atom. Involved in the biosynthesis of lipid A, a phosphorylated glycolipid that anchors the lipopolysaccharide to the outer membrane of the cell. This Shewanella sp. (strain ANA-3) protein is UDP-2,3-diacylglucosamine hydrolase.